The chain runs to 129 residues: UPF0102 protein Mrad2831_2938 (129 aa).

This sequence belongs to the UPF0102 family.

This Methylobacterium radiotolerans (strain ATCC 27329 / DSM 1819 / JCM 2831 / NBRC 15690 / NCIMB 10815 / 0-1) protein is UPF0102 protein Mrad2831_2938.